Reading from the N-terminus, the 650-residue chain is MICOS complex subunit MIC60, mitochondrial (650 aa).

The N-terminal 34 residues, Met-1–Asn-34, are a transit peptide targeting the mitochondrion. Residues Arg-26–Lys-74 are disordered. Over residues His-28 to Lys-40 the composition is skewed to polar residues. The Mitochondrial matrix portion of the chain corresponds to Ala-35–Lys-74. A helical membrane pass occupies residues Val-75–Leu-95. The Mitochondrial intermembrane segment spans residues Asp-96–His-549. Disordered stretches follow at residues Glu-121–Leu-168, Gln-239–Ile-267, and Glu-284–Thr-304. Residues Glu-284 to Gln-299 show a composition bias toward low complexity. Coiled-coil stretches lie at residues Ala-345–Arg-369 and Lys-396–Ala-430. A helical transmembrane segment spans residues Phe-550–Ser-570. Topologically, residues Ser-571 to Thr-650 are mitochondrial matrix.

It belongs to the MICOS complex subunit Mic60 family. In terms of assembly, component of the mitochondrial contact site and cristae organizing system (MICOS) complex. The MICOS complex associates with mitochondrial outer membrane proteins. Present in a large lipid-enriched complex called mitochondrial transmembrane lipoprotein (MTL) complex made of proteins located in the two mitochondrial membranes, including the TOM complex and the core components of the MICOS complex and containing at least digalactosyldiacylglycerol (DGDG). Binds to TOM40-1. Component of a mitochondrial large protein complex that contains, at least, MIC60, DGS1, TOM40, TOM20 proteins, and petC/RISP.

The protein localises to the mitochondrion inner membrane. Functionally, component of the MICOS complex, a large protein complex of the mitochondrial inner membrane that plays crucial roles in the maintenance of crista junctions, inner membrane architecture, and formation of contact sites to the outer membrane. Plays a role in keeping cristae membranes connected to the inner boundary membrane. Also promotes protein import via the mitochondrial intermembrane space assembly (MIA) pathway. Involved in the maintenance of mitochondria morphology. Binds to glycerolipids such as cardiolipin (CL). Contributes to the export of phosphatidylethanolamine (PE) from mitochondria and to the import of galactoglycerolipids from plastids during phosphate (Pi) starvation. Promotes lipid desorption from membranes, likely as an initial step for lipid transfer, and regulates probably the tethering between the inner and outer membranes of mitochondria by binding to TOM40 proteins. The chain is MICOS complex subunit MIC60, mitochondrial from Arabidopsis thaliana (Mouse-ear cress).